Here is a 360-residue protein sequence, read N- to C-terminus: DNA replication and repair protein RecF (360 aa).

An ATP-binding site is contributed by 30 to 37; the sequence is GQNGSGKT.

This sequence belongs to the RecF family.

It localises to the cytoplasm. The RecF protein is involved in DNA metabolism; it is required for DNA replication and normal SOS inducibility. RecF binds preferentially to single-stranded, linear DNA. It also seems to bind ATP. The sequence is that of DNA replication and repair protein RecF from Shewanella loihica (strain ATCC BAA-1088 / PV-4).